The chain runs to 96 residues: Large ribosomal subunit protein uL15 (96 aa).

This sequence belongs to the universal ribosomal protein uL15 family. In terms of assembly, part of the 50S ribosomal subunit.

Functionally, binds to the 23S rRNA. In Streptomyces scabiei, this protein is Large ribosomal subunit protein uL15 (rplO).